A 93-amino-acid chain; its full sequence is DNA/RNA-binding protein Alba (93 aa).

Position 11 is an N6-acetyllysine (Lys11).

The protein belongs to the histone-like Alba family. In terms of processing, acetylated. Acetylation at Lys-11 decreases DNA-binding affinity.

It localises to the cytoplasm. The protein localises to the chromosome. Binds double-stranded DNA tightly but without sequence specificity. Involved in DNA compaction. In Pyrococcus abyssi (strain GE5 / Orsay), this protein is DNA/RNA-binding protein Alba.